The following is a 180-amino-acid chain: Cytokinin-beta-glucosidase 2 (180 aa).

Functionally, hydrolyzes cytokinin glucosides thus liberating free cytokinins. This chain is Cytokinin-beta-glucosidase 2 (ROLC2), found in Linaria vulgaris (Toadflax).